Consider the following 275-residue polypeptide: Ribosomal RNA small subunit methyltransferase A (275 aa).

N28, L30, G55, E77, D103, and N123 together coordinate S-adenosyl-L-methionine.

The protein belongs to the class I-like SAM-binding methyltransferase superfamily. rRNA adenine N(6)-methyltransferase family. RsmA subfamily.

The protein resides in the cytoplasm. It catalyses the reaction adenosine(1518)/adenosine(1519) in 16S rRNA + 4 S-adenosyl-L-methionine = N(6)-dimethyladenosine(1518)/N(6)-dimethyladenosine(1519) in 16S rRNA + 4 S-adenosyl-L-homocysteine + 4 H(+). Functionally, specifically dimethylates two adjacent adenosines (A1518 and A1519) in the loop of a conserved hairpin near the 3'-end of 16S rRNA in the 30S particle. May play a critical role in biogenesis of 30S subunits. This Allorhizobium ampelinum (strain ATCC BAA-846 / DSM 112012 / S4) (Agrobacterium vitis (strain S4)) protein is Ribosomal RNA small subunit methyltransferase A.